Here is a 247-residue protein sequence, read N- to C-terminus: Putative methyltransferase YqeM (247 aa).

This sequence belongs to the methyltransferase superfamily.

May be a S-adenosyl-L-methionine (SAM)-dependent methyltransferase. This is Putative methyltransferase YqeM (yqeM) from Bacillus subtilis (strain 168).